The sequence spans 247 residues: Membrane-embedded CAAX protease MroQ (247 aa).

A signal peptide spans Met-1–Ser-17. A run of 3 helical transmembrane segments spans residues Val-42–Leu-62, Ile-81–Ile-101, and Leu-119–Leu-139. Glu-141 is an active-site residue. 2 consecutive transmembrane segments (helical) span residues Ile-162–Asp-182 and Phe-183–Thr-203.

Belongs to the peptidase U48 family.

The protein localises to the membrane. In terms of biological role, participates in the regulation of the Agr quorum sensing activity and plays thereby an important role in virulence. Mechanistically, elicits a protease dependent control of Agr activity without playing a role in the processing of the pheromone-precursor AgrD. This chain is Membrane-embedded CAAX protease MroQ (mroQ), found in Staphylococcus aureus (strain USA300).